The chain runs to 98 residues: Integration host factor subunit alpha (98 aa).

The segment at 49–71 (FGNFDLRDKNQRPGRNPKTGEDI) is disordered.

Belongs to the bacterial histone-like protein family. As to quaternary structure, heterodimer of an alpha and a beta chain.

Functionally, this protein is one of the two subunits of integration host factor, a specific DNA-binding protein that functions in genetic recombination as well as in transcriptional and translational control. This chain is Integration host factor subunit alpha, found in Shewanella sp. (strain ANA-3).